Reading from the N-terminus, the 161-residue chain is Nucleotide-binding protein Plav_2177 (161 aa).

This sequence belongs to the YajQ family.

In terms of biological role, nucleotide-binding protein. This is Nucleotide-binding protein Plav_2177 from Parvibaculum lavamentivorans (strain DS-1 / DSM 13023 / NCIMB 13966).